We begin with the raw amino-acid sequence, 1523 residues long: uncharacterized protein (1523 aa).

Positions 1–89 (MLPTSSNNEE…GSSNMNPYDR (89 aa)) are disordered. Position 993 to 1000 (993 to 1000 (SPFGCGKS)) interacts with ATP. 2 stretches are compositionally biased toward polar residues: residues 1463 to 1476 (TSRQ…NEYN) and 1485 to 1498 (QSNN…SVTN). A disordered region spans residues 1463–1498 (TSRQSKQQRANEYNSQHKHVKRQSNNDYGSQRSVTN).

Belongs to the DNA2/NAM7 helicase family.

This is an uncharacterized protein from Caenorhabditis elegans.